The sequence spans 446 residues: MQTQARPPVPQGPRFNHPATPQQVRRPINAPLPGQTAQIQGNRGPQPPKKKKRYADKLIQPKVRELVPESQAYMDLLAFEQKLDSTITRKKIDVQEALKRPQKIKKRLRIYISHTFIAGKEPEKEGDDASVPMWELRVEGRLLDDMQHPTVGANPRPAPKRKFSSFFKSLVIELDKDIYGPDNHLVEWHRTPQTNETDGFQVKRPGDRPVKCTILLLLDYQPMKFKLHPRLAKVLGIAAETRPRIIEALWQYIKTHKLQDPQDRDTINNDLFLEQCFGVSKMRFMEIPQRLHQLLQQPDPLVLNHIIQRPDDGQDKTSACYDIDVELEDPVKQQMANFVHNQTNANDIQLLDQKIFDLVDQINEMKLRRDFFLRFSNEPSGFIKKWVVSQNSDLKTLTESSGDGESDRYATTYSTTDTDEGVSRYMYQKIQQKRAELEQSLGIRNN.

The disordered stretch occupies residues 1–53; that stretch reads MQTQARPPVPQGPRFNHPATPQQVRRPINAPLPGQTAQIQGNRGPQPPKKKKR. The region spanning 220–297 is the SWIB/MDM2 domain; that stretch reads YQPMKFKLHP…PQRLHQLLQQ (78 aa).

Belongs to the SMARCD family. In terms of assembly, component of the multiprotein chromatin-remodeling complexes SWI/SNF: SWI/SNF-A (BAF), SWI/SNF-B (PBAF) and related complexes. The canonical complex contains a catalytic subunit swsn-4, core subunits swsn-1 and swsn-5, and accessory subunits swsn-3, swsn-6, phf-10, dpff-1, swsn-9 and either ham-3/swsn-2.1 or swsn-2.2. May interact with blmp-1. As to expression, broadly expressed in all cell types.

The protein resides in the nucleus. In terms of biological role, involved in transcriptional activation and repression of select genes by chromatin remodeling (alteration of DNA-nucleosome topology). Component of SWI/SNF chromatin remodeling complexes that carry out key enzymatic activities, changing chromatin structure by altering DNA-histone contacts within a nucleosome in an ATP-dependent manner. Required for the blmp-1-mediated transcriptional activation or repression of several hypodermal genes such as bed-3. Involved in regulating differentiation, migration and axon pathfinding of specific serotonergic neurons (HSNs). Probably regulates vulva development through the let-60/Ras pathway. May be involved in regulation of developmental processes in the embryo driven by the Wnt pathway. Involved in gonadogenesis. This chain is SWI/SNF chromatin-remodeling accessory subunit 1, found in Caenorhabditis elegans.